Here is a 125-residue protein sequence, read N- to C-terminus: MTGATLTVRVIRNFEYRTLKNVVFHDIDLATTTVDQFKKIIDERIQTDPSLKIYRTTHFDTLKIYVKAQQHKTQNLAINLDHDDWILNDGAKTLSLCGIENETELSYFELAAYKAYQANPVQKWL.

The protein belongs to the UPF0538 family.

This is UPF0538 protein C2C4.04c from Schizosaccharomyces pombe (strain 972 / ATCC 24843) (Fission yeast).